The following is a 154-amino-acid chain: Histidine-containing phosphotransfer protein 1 (154 aa).

The residue at position 1 (Met1) is an N-acetylmethionine. In terms of domain architecture, HPt spans 38–143 (NPDFVSQVVT…FKLEQQIVAS (106 aa)). His79 is subject to Phosphohistidine.

In terms of assembly, interacts with the B-type response regulators ARR1, ARR2, ARR4 and ARR9. Binds to ETR1, AHK2, AHK3, AHK4, AHK5 and FBR12. Post-translationally, two-component system major event consists of a His-to-Asp phosphorelay between a sensor histidine kinase (HK) and a response regulator (RR). In plants, the His-to-Asp phosphorelay involves an additional intermediate named Histidine-containing phosphotransfer protein (HPt). This multistep phosphorelay consists of a His-Asp-His-Asp sequential transfer of a phosphate group between first a His and an Asp of the HK protein, followed by the transfer to a conserved His of the HPt protein and finally the transfer to an Asp in the receiver domain of the RR protein. Strongly expressed in roots.

Its subcellular location is the cytoplasm. It is found in the cytosol. The protein resides in the nucleus. Functionally, functions as a two-component phosphorelay mediators between cytokinin sensor histidine kinases and response regulator (B-type ARRs). Plays an important role in propagating cytokinin signal transduction through the multistep His-to-Asp phosphorelay. In Arabidopsis thaliana (Mouse-ear cress), this protein is Histidine-containing phosphotransfer protein 1 (AHP1).